We begin with the raw amino-acid sequence, 281 residues long: NADPH-dependent 7-cyano-7-deazaguanine reductase (281 aa).

Substrate is bound at residue 88-90; that stretch reads IES. 90–91 contacts NADPH; that stretch reads SK. Catalysis depends on Cys189, which acts as the Thioimide intermediate. The active-site Proton donor is Asp196. Position 228-229 (228-229) interacts with substrate; sequence HE. 257–258 is a binding site for NADPH; sequence RG.

Belongs to the GTP cyclohydrolase I family. QueF type 2 subfamily. As to quaternary structure, homodimer.

It localises to the cytoplasm. It carries out the reaction 7-aminomethyl-7-carbaguanine + 2 NADP(+) = 7-cyano-7-deazaguanine + 2 NADPH + 3 H(+). It participates in tRNA modification; tRNA-queuosine biosynthesis. Its function is as follows. Catalyzes the NADPH-dependent reduction of 7-cyano-7-deazaguanine (preQ0) to 7-aminomethyl-7-deazaguanine (preQ1). This is NADPH-dependent 7-cyano-7-deazaguanine reductase from Erwinia tasmaniensis (strain DSM 17950 / CFBP 7177 / CIP 109463 / NCPPB 4357 / Et1/99).